The chain runs to 328 residues: Phosphate acyltransferase (328 aa).

This sequence belongs to the PlsX family. As to quaternary structure, homodimer. Probably interacts with PlsY.

It is found in the cytoplasm. The catalysed reaction is a fatty acyl-[ACP] + phosphate = an acyl phosphate + holo-[ACP]. It participates in lipid metabolism; phospholipid metabolism. Catalyzes the reversible formation of acyl-phosphate (acyl-PO(4)) from acyl-[acyl-carrier-protein] (acyl-ACP). This enzyme utilizes acyl-ACP as fatty acyl donor, but not acyl-CoA. The protein is Phosphate acyltransferase of Campylobacter jejuni subsp. doylei (strain ATCC BAA-1458 / RM4099 / 269.97).